Consider the following 575-residue polypeptide: Homocysteine/cysteine synthase (575 aa).

K376 bears the N6-(pyridoxal phosphate)lysine mark.

It belongs to the trans-sulfuration enzymes family. MET7 subfamily. Pyridoxal 5'-phosphate is required as a cofactor.

The protein resides in the cytoplasm. The catalysed reaction is O-acetyl-L-homoserine + methanethiol = L-methionine + acetate + H(+). The enzyme catalyses O-acetyl-L-homoserine + hydrogen sulfide = L-homocysteine + acetate. It carries out the reaction O-acetyl-L-serine + hydrogen sulfide = L-cysteine + acetate. It functions in the pathway amino-acid biosynthesis; L-methionine biosynthesis via de novo pathway; L-homocysteine from O-acetyl-L-homoserine. Plays a role in inorganic sulfur assimilation during sulfur-limited conditions; catalyzes the conversion of O-acetyl-L-homoserine (OAH) into homocysteine in the methionine biosynthesis pathway. Also catalyzes the conversion of O-acetylserine (OAS) into cysteine, the last step in the cysteine biosynthesis pathway. However, it seems that in S.cerevisiae cysteine biosynthesis occurs exclusively through the cystathionine pathway and not via direct incorporation of sulfur into OAS. It therefore has no metabolic role in cysteine biosynthesis and may only have a regulatory role controlling OAS levels. This chain is Homocysteine/cysteine synthase, found in Saccharomyces cerevisiae (strain ATCC 204508 / S288c) (Baker's yeast).